Consider the following 169-residue polypeptide: Small ribosomal subunit protein uS5c (169 aa).

Positions 17–80 constitute an S5 DRBM domain; it reads WQERVIQVRR…TDGRKNLINI (64 aa).

The protein belongs to the universal ribosomal protein uS5 family. As to quaternary structure, part of the 30S ribosomal subunit. Contacts protein S4.

The protein resides in the plastid. It is found in the chloroplast. In terms of biological role, with S4 and S12 plays an important role in translational accuracy. In Guillardia theta (Cryptophyte), this protein is Small ribosomal subunit protein uS5c (rps5).